Reading from the N-terminus, the 303-residue chain is Putative 1-phosphofructokinase (303 aa).

ATP-binding positions include 217 to 222 (SDGDKG) and 249 to 250 (GD). Asp250 serves as the catalytic Proton acceptor.

Belongs to the carbohydrate kinase PfkB family.

The catalysed reaction is beta-D-fructose 1-phosphate + ATP = beta-D-fructose 1,6-bisphosphate + ADP + H(+). Its function is as follows. Catalyzes the ATP-dependent phosphorylation of fructose-l-phosphate to fructose-l,6-bisphosphate. The sequence is that of Putative 1-phosphofructokinase (fruK) from Mycoplasma genitalium (strain ATCC 33530 / DSM 19775 / NCTC 10195 / G37) (Mycoplasmoides genitalium).